Reading from the N-terminus, the 151-residue chain is 3-dehydroquinate dehydratase (151 aa).

Residue Tyr-26 is the Proton acceptor of the active site. Substrate is bound by residues Asn-75, His-81, and Asp-88. His-101 acts as the Proton donor in catalysis. Residues Leu-102–Ser-103 and Arg-112 contribute to the substrate site.

This sequence belongs to the type-II 3-dehydroquinase family. In terms of assembly, homododecamer.

It catalyses the reaction 3-dehydroquinate = 3-dehydroshikimate + H2O. The protein operates within metabolic intermediate biosynthesis; chorismate biosynthesis; chorismate from D-erythrose 4-phosphate and phosphoenolpyruvate: step 3/7. In terms of biological role, catalyzes a trans-dehydration via an enolate intermediate. The protein is 3-dehydroquinate dehydratase of Shewanella halifaxensis (strain HAW-EB4).